We begin with the raw amino-acid sequence, 506 residues long: Histidine--tRNA ligase, mitochondrial (506 aa).

The N-terminal 33 residues, 1–33 (MPQLGLLPGRAWTVLLGLLRPPPGALCIRAVRS), are a transit peptide targeting the mitochondrion. Ser67 is modified (phosphoserine). L-histidine contacts are provided by residues 131–133 (DLT), Arg158, Gln174, Asp178, Arg327, and 331–332 (YY). The residue at position 444 (Lys444) is an N6-acetyllysine.

This sequence belongs to the class-II aminoacyl-tRNA synthetase family. Homodimer.

It localises to the mitochondrion. It catalyses the reaction tRNA(His) + L-histidine + ATP = L-histidyl-tRNA(His) + AMP + diphosphate + H(+). Its function is as follows. Mitochondrial aminoacyl-tRNA synthetase that catalyzes the ATP-dependent ligation of histidine to the 3'-end of its cognate tRNA, via the formation of an aminoacyl-adenylate intermediate (His-AMP). This chain is Histidine--tRNA ligase, mitochondrial (HARS2), found in Bos taurus (Bovine).